The sequence spans 355 residues: Protein RecA (355 aa).

67–74 (GPESSGKT) lines the ATP pocket.

Belongs to the RecA family.

The protein localises to the cytoplasm. Can catalyze the hydrolysis of ATP in the presence of single-stranded DNA, the ATP-dependent uptake of single-stranded DNA by duplex DNA, and the ATP-dependent hybridization of homologous single-stranded DNAs. It interacts with LexA causing its activation and leading to its autocatalytic cleavage. This chain is Protein RecA, found in Proteus mirabilis (strain HI4320).